Consider the following 472-residue polypeptide: Glycine--tRNA ligase (472 aa).

Substrate is bound by residues R109 and E174. ATP contacts are provided by residues 206–208, 216–221, 293–294, and 337–340; these read RNE, FRTREF, EL, and GLTR. 221–225 contributes to the substrate binding site; it reads FEQME. 333–337 is a binding site for substrate; sequence EPAAG.

This sequence belongs to the class-II aminoacyl-tRNA synthetase family. Homodimer.

The protein localises to the cytoplasm. The enzyme catalyses tRNA(Gly) + glycine + ATP = glycyl-tRNA(Gly) + AMP + diphosphate. Functionally, catalyzes the attachment of glycine to tRNA(Gly). This chain is Glycine--tRNA ligase, found in Cutibacterium acnes (strain DSM 16379 / KPA171202) (Propionibacterium acnes).